Consider the following 317-residue polypeptide: Olfactory receptor 2F2 (317 aa).

Residues 1–25 are Extracellular-facing; the sequence is MEIDNQTWVREFILLGLSSDWCTQI. An N-linked (GlcNAc...) asparagine glycan is attached at Asn-5. The chain crosses the membrane as a helical span at residues 26–49; sequence SLFSLFLVTYLMTVLGNCLIVLLI. The Cytoplasmic segment spans residues 50–57; that stretch reads RLDSRLHT. A helical transmembrane segment spans residues 58-79; it reads PMYFFLTNLSLVDVSYATSVVP. At 80 to 100 the chain is on the extracellular side; the sequence is QLLAHFLAEHKAIPFQSCAAQ. Cysteines 97 and 189 form a disulfide. The helical transmembrane segment at 101–120 threads the bilayer; sequence LFFSLALGGIEFVLLAVMAY. Topologically, residues 121 to 139 are cytoplasmic; it reads DRHVAVSDRLRYSAIMHGG. The chain crosses the membrane as a helical span at residues 140 to 158; the sequence is LCARLAITSWVSGSINSLV. The Extracellular segment spans residues 159 to 195; it reads QTAITFQLPMCTNKFIDHISCELLAVVRLACVDTSSN. The helical transmembrane segment at 196–219 threads the bilayer; the sequence is EAAIMVSSIVLLMTPFCLVLLSYI. Residues 220–236 are Cytoplasmic-facing; that stretch reads RIISTILKIQSREGRKK. A helical membrane pass occupies residues 237–259; that stretch reads AFHTCASHLTVVALCYGTTIFTY. Residues 260 to 272 lie on the Extracellular side of the membrane; the sequence is IQPHSGPSVLQEK. The helical transmembrane segment at 273 to 292 threads the bilayer; sequence LISVFYAIVMPLLNPVIYSL. Topologically, residues 293-317 are cytoplasmic; that stretch reads RNKEVKGAWHKLLEKFSGLTSKLGT.

The protein belongs to the G-protein coupled receptor 1 family.

Its subcellular location is the cell membrane. Functionally, odorant receptor. This is Olfactory receptor 2F2 (OR2F2) from Homo sapiens (Human).